The primary structure comprises 97 residues: Insertion element IS2 uncharacterized 11.1 kDa protein (97 aa).

The polypeptide is Insertion element IS2 uncharacterized 11.1 kDa protein (Escherichia coli).